The primary structure comprises 234 residues: Probable chemoreceptor glutamine deamidase CheD (234 aa).

It belongs to the CheD family.

It catalyses the reaction L-glutaminyl-[protein] + H2O = L-glutamyl-[protein] + NH4(+). Probably deamidates glutamine residues to glutamate on methyl-accepting chemotaxis receptors (MCPs), playing an important role in chemotaxis. This is Probable chemoreceptor glutamine deamidase CheD from Burkholderia mallei (strain NCTC 10247).